A 200-amino-acid chain; its full sequence is FMN-dependent NADH:quinone oxidoreductase (200 aa).

Residues Ser10 and 95–98 contribute to the FMN site; that span reads MYNF.

The protein belongs to the azoreductase type 1 family. As to quaternary structure, homodimer. The cofactor is FMN.

It catalyses the reaction 2 a quinone + NADH + H(+) = 2 a 1,4-benzosemiquinone + NAD(+). The catalysed reaction is N,N-dimethyl-1,4-phenylenediamine + anthranilate + 2 NAD(+) = 2-(4-dimethylaminophenyl)diazenylbenzoate + 2 NADH + 2 H(+). In terms of biological role, quinone reductase that provides resistance to thiol-specific stress caused by electrophilic quinones. Functionally, also exhibits azoreductase activity. Catalyzes the reductive cleavage of the azo bond in aromatic azo compounds to the corresponding amines. In Alteromonas mediterranea (strain DSM 17117 / CIP 110805 / LMG 28347 / Deep ecotype), this protein is FMN-dependent NADH:quinone oxidoreductase.